The primary structure comprises 542 residues: MESQRNILLIGLLFVSFLMWQQWQTDKAPKPATAQTVTQTNAASQHSADVPEADISGVPVELPANKNLISVKTDQLDIKISPIGGDIVYAALVEHKREIDSSDPFVILEQKNNFTYIAQSGLIGRDGIDSSANGRAAYSVQTNSYSLADGKDTLTVPFTYTADNGVTYVKSFTFTRGQYDVGVDYSISNTSAAPLQVQMYGQIKQTIKESESSMMMPTYRGGAFSAQDTRYEKYNFDDMADKNLAKVTLGGWAAMLQHYFVSAWVPPATDSNTIFSSMSAGGMANIGFRGAVYDIAPGATQEINSQFYVGPKNQKELSAISETLNLVVDYGFLWWLAIPIHWLLMFYQSFVGNWGVAIILITLTVRGGLYPLTKKQYTSMAKMRNLQPKLTEMKERFGDDRQKMGQAMMELYKKEKVNPMGGCLPILLQMPIFIALYWVLLESYELRHAPFMLWITDLSVQDPYYVLPLLMGLSMFLMQKMQPVAPTMDPMQVKMMQWMPVIFTVFFLWFPAGLVLYWLVGNLVAITQQKIIYAGLEKNGIK.

The next 6 membrane-spanning stretches (helical) occupy residues 6 to 26 (NILL…WQTD), 326 to 346 (LVVD…LLMF), 350 to 370 (FVGN…GGLY), 421 to 441 (GGCL…WVLL), 458 to 478 (LSVQ…MFLM), and 501 to 521 (VIFT…WLVG).

The protein belongs to the OXA1/ALB3/YidC family. Type 1 subfamily. As to quaternary structure, interacts with the Sec translocase complex via SecD. Specifically interacts with transmembrane segments of nascent integral membrane proteins during membrane integration.

It is found in the cell inner membrane. Functionally, required for the insertion and/or proper folding and/or complex formation of integral membrane proteins into the membrane. Involved in integration of membrane proteins that insert both dependently and independently of the Sec translocase complex, as well as at least some lipoproteins. Aids folding of multispanning membrane proteins. The sequence is that of Membrane protein insertase YidC from Shewanella frigidimarina (strain NCIMB 400).